Consider the following 87-residue polypeptide: Small polypeptide ROTUNDIFOLIA LIKE 2 (87 aa).

The helical transmembrane segment at 19–35 (LIPHTSHYILQLVYLHL) threads the bilayer. A required for DVL/RTFL small polypeptide activity region spans residues 56–87 (GQMGRLNRAFREKRARFYIFRRCVIMLLRWSD).

It belongs to the DVL/RTFL small polypeptides family.

The protein resides in the cell membrane. Its function is as follows. Small polypeptide acting as a regulatory molecule which coordinates cellular responses required for differentiation, growth and development, probably by restricting polar cell proliferation in lateral organs. This chain is Small polypeptide ROTUNDIFOLIA LIKE 2, found in Oryza sativa subsp. japonica (Rice).